A 219-amino-acid chain; its full sequence is Translation initiation factor IF-3 (219 aa).

This sequence belongs to the IF-3 family. Monomer.

The protein localises to the cytoplasm. Functionally, IF-3 binds to the 30S ribosomal subunit and shifts the equilibrium between 70S ribosomes and their 50S and 30S subunits in favor of the free subunits, thus enhancing the availability of 30S subunits on which protein synthesis initiation begins. The chain is Translation initiation factor IF-3 from Prochlorococcus marinus (strain MIT 9303).